A 201-amino-acid chain; its full sequence is Small ribosomal subunit protein uS4 (201 aa).

The disordered stretch occupies residues 1 to 42 (MARYTGPATRKSRRLGVDLVGGDQSFEKRPYPPGQHGRARIK). Positions 91–157 (SRLDNVVYRA…LPFQIARETA (67 aa)) constitute an S4 RNA-binding domain.

It belongs to the universal ribosomal protein uS4 family. Part of the 30S ribosomal subunit. Contacts protein S5. The interaction surface between S4 and S5 is involved in control of translational fidelity.

One of the primary rRNA binding proteins, it binds directly to 16S rRNA where it nucleates assembly of the body of the 30S subunit. Functionally, with S5 and S12 plays an important role in translational accuracy. The chain is Small ribosomal subunit protein uS4 from Mycolicibacterium smegmatis (strain ATCC 700084 / mc(2)155) (Mycobacterium smegmatis).